The following is an 87-amino-acid chain: Large ribosomal subunit protein bL28 (87 aa).

Belongs to the bacterial ribosomal protein bL28 family.

This chain is Large ribosomal subunit protein bL28, found in Methylacidiphilum infernorum (isolate V4) (Methylokorus infernorum (strain V4)).